The primary structure comprises 1098 residues: NACHT, LRR and PYD domains-containing protein 5 (1098 aa).

One can recognise a Pyrin domain in the interval 1–97 (MREAKIAPLS…SEMARDEMKK (97 aa)). The tract at residues 104 to 131 (SEDSAPTKTDQGPSMKEVPGPREDPQDS) is disordered. A compositionally biased stretch (basic and acidic residues) spans 122–131 (PGPREDPQDS). The 324-residue stretch at 180–503 (LTVVLHGPPG…ALFYVLRGVE (324 aa)) folds into the NACHT domain. 186-193 (GPPGVGKS) is a binding site for ATP. LRR repeat units lie at residues 851-871 (GLTH…SLLC), 880-900 (GLQK…GFLA), 908-928 (HLTH…NLLC), 937-958 (PLRD…SLSN), 965-985 (RLRS…AALC), 993-1013 (TLTR…KALS), and 1021-1041 (HLAS…TTLC).

The protein belongs to the NLRP family. In terms of assembly, component of the subcortical maternal complex (SCMC), at least composed of NLRP5, KHDC3, OOEP, and TLE6. Within the complex, interacts with OOEP, KHDC3 and TLE6. The SCMC may facilitate translocation of its components between the nuclear and cytoplasmic compartments. As part of the SCMC interacts with the SCMC-associated protein ZBED3. As part of the SCMC interacts with the SCMC-associated protein CFL1/Cofilin-1. Interacts with PRKCE. Interacts with TUBB3 at cytoskeleton microtubules. In terms of processing, phosphorylated by PRKCE. In terms of tissue distribution, oocyte-specific.

It localises to the cytoplasm. Its subcellular location is the cytoplasmic vesicle. It is found in the secretory vesicle. The protein resides in the cortical granule. The protein localises to the mitochondrion. It localises to the nucleus. Its subcellular location is the nucleolus. It is found in the golgi apparatus. Component of the subcortical maternal complex (SCMC), a multiprotein complex that plays a key role in early embryonic development. The SCMC complex is a structural constituent of cytoplasmic lattices, which consist in fibrous structures found in the cytoplasm of oocytes and preimplantation embryos. They are required to store maternal proteins critical for embryonic development, such as proteins that control epigenetic reprogramming of the preimplantation embryo, and prevent their degradation or activation. Required for the localization of cortical granules to the cortex of oocytes, via association with the cortical actin scaffold. Required for cortical actin clearance prior to oocyte exocytosis and prevention of polyspermy. Involved in regulating post-fertilization Ca(2+) release and endoplasmic reticulum storage (ER) storage via regulation of cellular localization. May be involved in the localization of mitochondria to the cytoplasm and perinuclear region in oocytes and early stage embryos, independent of its role in CPL formation. This is NACHT, LRR and PYD domains-containing protein 5 (NLRP5) from Bos taurus (Bovine).